Reading from the N-terminus, the 781-residue chain is Pyrin (781 aa).

The Pyrin domain maps to 1 to 92 (MAKTPSDHLL…AEELHRAAIQ (92 aa)). Over residues 93–111 (EYSTQENGTDDSAASSSLG) the composition is skewed to polar residues. The tract at residues 93–226 (EYSTQENGTD…AGGAPGQKEC (134 aa)) is disordered. Over residues 113-126 (NKPRSLKTPDHPEG) the composition is skewed to basic and acidic residues. The span at 153–163 (LSRKPLSKRRE) shows a compositional bias: basic residues. Ser242 is subject to Phosphoserine. The tract at residues 266 to 280 (KTAANLDSATEPRAR) is interaction with RELA. Disordered stretches follow at residues 270–322 (NLDS…EGDP) and 336–373 (EAVS…QPLP). The B box-type zinc-finger motif lies at 370-412 (QPLPQCKRHLKQVQLLFCEDHDEPICLICSLSQEHQGHRVRPI). The stretch at 413–442 (EEVALEHKKKIQKQLEHLKKLRKSGEEQRS) forms a coiled coil. Positions 420-437 (KKKIQKQLEHLKKLRKSG) match the Nuclear localization signal motif. Residues 420-582 (KKKIQKQLEH…YFSETLRSEM (163 aa)) form a required for homotrimerization and induction of pyroptosomes region. The B30.2/SPRY domain maps to 580 to 775 (SEMEMFNVPE…NTAPLTICPV (196 aa)).

Homotrimer. Interacts (via the B box-type zinc finger) with PSTPIP1. Interacts (via the B30.2/SPRY domain) with several components of the inflammasome complex, including CASP1 p20 and p10 subunits, CASP5, PYCARD, NLRP1, NLRP2 and NLRP3, as well as with unprocessed IL1B; this interaction may lead to autophagic degradation of these proteins. Component of the AIM2 PANoptosome complex, a multiprotein complex that drives inflammatory cell death (PANoptosis). Interacts with NFKBIA and RELA. Interacts weakly with VASP and ACTR3. Interacts with active ULK1 (phosphorylated on 'Ser-317') and BECN1 simultaneously. Also interacts with ATG16L1 (via WD repeats), and with ATG8 family members, including GABARAP, GABARAPL1 and, to a lesser extent, GABARAPL2, MAP1LC3A/LC3A and MAP1LC3C/LC3C. Interacts with TRIM21. Interacts with YWHAB, YWHAE, YWHAG, YWHAH, YWHAQ and YWHAZ; the interaction is required for the down-regulation of pyrin pro-inflammatory activity. In terms of processing, cleaved by CASP1. The N-terminal cleavage product localizes to the nucleus as a filamentous network and to the cytoplasm, interacts more strongly with RELA and NFKBIA than the full-length protein, enhances the nuclear localization of RELA and induces NFKBIA proteolysis. The C-terminal cleavage product localizes to the cytoplasm. Post-translationally, phosphorylation at Ser-242 is required for the interaction with 14-3-3 proteins and down-regulation of pyrin pro-inflammatory activity. Degraded along with the delivery of its substrates to autolysosomal compartments (at protein level). In terms of tissue distribution, expressed in peripheral blood leukocytes, particularly in mature granulocytes and to a lesser extent in monocytes but not in lymphocytes. Detected in spleen, lung and muscle, probably as a result of leukocyte infiltration in these tissues. Not expressed in thymus, prostate, testis, ovary, small intestine, colon, heart, brain, placenta, liver, kidney, pancreas. Expression detected in several myeloid leukemic, colon cancer, and prostate cancer cell lines.

It localises to the cytoplasm. The protein resides in the cytoskeleton. The protein localises to the cell projection. Its subcellular location is the ruffle. It is found in the lamellipodium. It localises to the nucleus. The protein resides in the cytoplasmic vesicle. The protein localises to the autophagosome. Involved in the regulation of innate immunity and the inflammatory response in response to IFNG/IFN-gamma. Organizes autophagic machinery by serving as a platform for the assembly of ULK1, Beclin 1/BECN1, ATG16L1, and ATG8 family members and recognizes specific autophagy targets, thus coordinating target recognition with assembly of the autophagic apparatus and initiation of autophagy. Acts as an autophagy receptor for the degradation of several inflammasome components, including CASP1, NLRP1 and NLRP3, hence preventing excessive IL1B- and IL18-mediated inflammation. However, it can also have a positive effect in the inflammatory pathway, acting as an innate immune sensor that triggers PYCARD/ASC specks formation, caspase-1 activation, and IL1B and IL18 production. Together with AIM2, also acts as a mediator of pyroptosis, necroptosis and apoptosis (PANoptosis), an integral part of host defense against pathogens, in response to bacterial infection. It is required for PSTPIP1-induced PYCARD/ASC oligomerization and inflammasome formation. Recruits PSTPIP1 to inflammasomes, and is required for PSTPIP1 oligomerization. This chain is Pyrin, found in Homo sapiens (Human).